The following is a 474-amino-acid chain: tRNA-2-methylthio-N(6)-dimethylallyladenosine synthase (474 aa).

The region spanning 3–120 (KKLHIKTWGC…LPEMINHVQG (118 aa)) is the MTTase N-terminal domain. Residues Cys12, Cys49, Cys83, Cys157, Cys161, and Cys164 each coordinate [4Fe-4S] cluster. The region spanning 143-375 (RADGPTAFVS…QDRITKQAMR (233 aa)) is the Radical SAM core domain. In terms of domain architecture, TRAM spans 378-441 (RLMLGTVQRI…TNSLRGIVVR (64 aa)).

It belongs to the methylthiotransferase family. MiaB subfamily. In terms of assembly, monomer. It depends on [4Fe-4S] cluster as a cofactor.

It localises to the cytoplasm. It catalyses the reaction N(6)-dimethylallyladenosine(37) in tRNA + (sulfur carrier)-SH + AH2 + 2 S-adenosyl-L-methionine = 2-methylsulfanyl-N(6)-dimethylallyladenosine(37) in tRNA + (sulfur carrier)-H + 5'-deoxyadenosine + L-methionine + A + S-adenosyl-L-homocysteine + 2 H(+). Its function is as follows. Catalyzes the methylthiolation of N6-(dimethylallyl)adenosine (i(6)A), leading to the formation of 2-methylthio-N6-(dimethylallyl)adenosine (ms(2)i(6)A) at position 37 in tRNAs that read codons beginning with uridine. The sequence is that of tRNA-2-methylthio-N(6)-dimethylallyladenosine synthase from Pectobacterium atrosepticum (strain SCRI 1043 / ATCC BAA-672) (Erwinia carotovora subsp. atroseptica).